Consider the following 362-residue polypeptide: 3-dehydroquinate synthase (362 aa).

Residues 71 to 76 (DGEQYK), 105 to 109 (GVIGD), 129 to 130 (TT), K142, K151, and 169 to 172 (CLKT) contribute to the NAD(+) site. The Zn(2+) site is built by E184, H247, and H264.

Belongs to the sugar phosphate cyclases superfamily. Dehydroquinate synthase family. Co(2+) serves as cofactor. It depends on Zn(2+) as a cofactor. Requires NAD(+) as cofactor.

The protein localises to the cytoplasm. The enzyme catalyses 7-phospho-2-dehydro-3-deoxy-D-arabino-heptonate = 3-dehydroquinate + phosphate. Its pathway is metabolic intermediate biosynthesis; chorismate biosynthesis; chorismate from D-erythrose 4-phosphate and phosphoenolpyruvate: step 2/7. Functionally, catalyzes the conversion of 3-deoxy-D-arabino-heptulosonate 7-phosphate (DAHP) to dehydroquinate (DHQ). The sequence is that of 3-dehydroquinate synthase from Salmonella agona (strain SL483).